A 410-amino-acid polypeptide reads, in one-letter code: Histidine--tRNA ligase (410 aa).

The protein belongs to the class-II aminoacyl-tRNA synthetase family.

It localises to the cytoplasm. It carries out the reaction tRNA(His) + L-histidine + ATP = L-histidyl-tRNA(His) + AMP + diphosphate + H(+). The protein is Histidine--tRNA ligase of Methanoregula boonei (strain DSM 21154 / JCM 14090 / 6A8).